A 100-amino-acid chain; its full sequence is Replication restart protein PriB (100 aa).

The region spanning 1 to 99 (MGFNNLVSLA…LRIQNIQEYK (99 aa)) is the SSB domain.

This sequence belongs to the PriB family. As to quaternary structure, homodimer. Interacts with PriA and DnaT. Component of the replication restart primosome. Primosome assembly occurs via a 'hand-off' mechanism. PriA binds to replication forks, subsequently PriB then DnaT bind; DnaT then displaces ssDNA to generate the helicase loading substrate.

Involved in the restart of stalled replication forks, which reloads the replicative helicase on sites other than the origin of replication; the PriA-PriB pathway is the major replication restart pathway. During primosome assembly it facilitates complex formation between PriA and DnaT on DNA; stabilizes PriA on DNA. Stimulates the DNA unwinding activity of PriA helicase. The protein is Replication restart protein PriB of Neisseria meningitidis serogroup A / serotype 4A (strain DSM 15465 / Z2491).